The sequence spans 214 residues: Ribonuclease HII (214 aa).

The RNase H type-2 domain maps to 26-214; the sequence is EIVCGVDEAG…PVRAALDLIR (189 aa). 3 residues coordinate a divalent metal cation: Asp-32, Glu-33, and Asp-124.

The protein belongs to the RNase HII family. Requires Mn(2+) as cofactor. It depends on Mg(2+) as a cofactor.

The protein localises to the cytoplasm. The enzyme catalyses Endonucleolytic cleavage to 5'-phosphomonoester.. Functionally, endonuclease that specifically degrades the RNA of RNA-DNA hybrids. This chain is Ribonuclease HII, found in Burkholderia lata (strain ATCC 17760 / DSM 23089 / LMG 22485 / NCIMB 9086 / R18194 / 383).